Reading from the N-terminus, the 121-residue chain is MTDRNRDKKSTSPSNSDTEMKSEQLPPCVNPGNPVFSCMLDPKTLQTATSLSKPQMIMYKTNSSHYGEFLPIPQFFPCNYTPKEQVFSSHIRATGFYQNNTLNTAPDRTRTLDFPNIQHTL.

The span at 1–10 shows a compositional bias: basic and acidic residues; sequence MTDRNRDKKS. The segment at 1–29 is disordered; sequence MTDRNRDKKSTSPSNSDTEMKSEQLPPCV.

The protein belongs to the PIERCE2 family. As to quaternary structure, microtubule inner protein component of sperm flagellar doublet microtubules. Interacts with CFAP53, ODAD1 and ODAD3; the interactions link the outer dynein arms docking complex (ODA-DC) to the internal microtubule inner proteins (MIP) in cilium axoneme. As to expression, expressed in airway epithelial cells.

The protein resides in the cytoplasm. It is found in the cytoskeleton. Its subcellular location is the cilium axoneme. It localises to the flagellum axoneme. Its function is as follows. Microtubule inner protein involved in the attachment of outer dynein arms (ODAs) to dynein-decorated doublet microtubules (DMTs) in cilia axoneme, which is required for motile cilia beating. This chain is Piercer of microtubule wall 2 protein, found in Homo sapiens (Human).